The primary structure comprises 57 residues: Large ribosomal subunit protein bL33 (57 aa).

Belongs to the bacterial ribosomal protein bL33 family.

The sequence is that of Large ribosomal subunit protein bL33 from Shewanella pealeana (strain ATCC 700345 / ANG-SQ1).